Reading from the N-terminus, the 452-residue chain is MKMERKNVWQHRNREEIESFSKEYMDFMGRAKTERLAVREIRKFLEKEGFVPIEDFAGDPMDMAVYAVNRGKAIAAFRVVDDLKKGLNLVVAHIDSPRLDFKPNPLVEDEQIALFKTHYYGGIKKYHWFNIPLEIHGVLFRGDGEEIEIHVGDKPEDPVFTIPDLLPHLDKEDAKISEKFKGENLMLIAGTIPLSGEEKEAVKMNVLKILNEMYGISEEDFVSGEIEVVPAFPPREVGIDRSLIGAYGQDDRICAYTALRAFLEANPKKSIGVVFLDKEEIGSDGNTGAKARFYLRVLRQILKIQGGPEIQNSHSMRYWKKSAVISGDVCAAVNPPYKDVHDLHNAPRSGYGVALVKYTGARGKYSTNDAHAEFVARVRQVLNERNVIWQVATLGKVDQGGGGTYAKFFAERGADVYDMGPALLGMHSPFEISSKADLFETYRAYRALLEDL.

Residues H93, H168, and H427 each contribute to the Zn(2+) site.

It belongs to the peptidase M18 family. Requires Zn(2+) as cofactor.

This Thermotoga neapolitana protein is Probable M18 family aminopeptidase 1 (apeA).